The primary structure comprises 222 residues: Latexin (222 aa).

One can recognise a Cystatin LXN-type 1 domain in the interval 1-97; that stretch reads MEIPPTNYPA…NFTFEGETGK (97 aa). Lysine 55 carries the post-translational modification N6-acetyllysine. The tract at residues 98-117 is alpha-helical linker; it reads NPDEEDNTFYQRLKSMKEPL. Residues 118–222 form the Cystatin LXN-type 2 domain; that stretch reads EAQNIPDNFG…SRLPKEVQLE (105 aa).

This sequence belongs to the protease inhibitor I47 (latexin) family. Highly expressed in heart, prostate, ovary, kidney, pancreas, and colon, moderate or low in other tissues including brain.

Its subcellular location is the cytoplasm. Functionally, hardly reversible, non-competitive, and potent inhibitor of CPA1, CPA2 and CPA4. May play a role in inflammation. The protein is Latexin (LXN) of Homo sapiens (Human).